Here is a 347-residue protein sequence, read N- to C-terminus: Heat-inducible transcription repressor HrcA (347 aa).

Belongs to the HrcA family.

Negative regulator of class I heat shock genes (grpE-dnaK-dnaJ and groELS operons). Prevents heat-shock induction of these operons. The polypeptide is Heat-inducible transcription repressor HrcA (Sorangium cellulosum (strain So ce56) (Polyangium cellulosum (strain So ce56))).